Reading from the N-terminus, the 402-residue chain is Mannonate dehydratase 1 (402 aa).

This sequence belongs to the mannonate dehydratase family. The cofactor is Fe(2+). Mn(2+) serves as cofactor.

The catalysed reaction is D-mannonate = 2-dehydro-3-deoxy-D-gluconate + H2O. It participates in carbohydrate metabolism; pentose and glucuronate interconversion. Functionally, catalyzes the dehydration of D-mannonate. The polypeptide is Mannonate dehydratase 1 (uxuA1) (Agrobacterium fabrum (strain C58 / ATCC 33970) (Agrobacterium tumefaciens (strain C58))).